A 253-amino-acid polypeptide reads, in one-letter code: Ribonuclease HII (253 aa).

Residues 32–223 (APVAGLDEAG…FKTSGEEDRI (192 aa)) form the RNase H type-2 domain. 3 residues coordinate a divalent metal cation: D38, E39, and D130.

The protein belongs to the RNase HII family. Requires Mn(2+) as cofactor. Mg(2+) is required as a cofactor.

The protein localises to the cytoplasm. The catalysed reaction is Endonucleolytic cleavage to 5'-phosphomonoester.. Endonuclease that specifically degrades the RNA of RNA-DNA hybrids. The chain is Ribonuclease HII from Chelativorans sp. (strain BNC1).